The sequence spans 101 residues: Venom protein 214 (101 aa).

The signal sequence occupies residues 1–16; it reads MIRYVLVIITCFLVAA.

Post-translationally, contains 3 disulfide bonds. As to expression, expressed by the venom gland.

It localises to the secreted. The polypeptide is Venom protein 214 (Lychas mucronatus (Chinese swimming scorpion)).